A 1513-amino-acid chain; its full sequence is DNA-directed RNA polymerase subunit beta'' (1513 aa).

Residues C220, C296, C303, and C306 each coordinate Zn(2+). A disordered region spans residues 644-769 (RTREKDSENE…EYGNPEEDSV (126 aa)). Basic and acidic residues predominate over residues 659-679 (NEYRTREEECKTLEDEYRTRE). A compositionally biased stretch (acidic residues) spans 680-707 (EEYETLEDEYGIPENEYETLEDEYGILE). A compositionally biased stretch (basic and acidic residues) spans 726–737 (NKYRPREDKYGT). Residues 738–767 (LEEDSEDEHGTLEEDSEEDSEDEYGNPEED) show a composition bias toward acidic residues.

This sequence belongs to the RNA polymerase beta' chain family. RpoC2 subfamily. In terms of assembly, in plastids the minimal PEP RNA polymerase catalytic core is composed of four subunits: alpha, beta, beta', and beta''. When a (nuclear-encoded) sigma factor is associated with the core the holoenzyme is formed, which can initiate transcription. Zn(2+) serves as cofactor.

The protein resides in the plastid. It localises to the chloroplast. The catalysed reaction is RNA(n) + a ribonucleoside 5'-triphosphate = RNA(n+1) + diphosphate. Its function is as follows. DNA-dependent RNA polymerase catalyzes the transcription of DNA into RNA using the four ribonucleoside triphosphates as substrates. The sequence is that of DNA-directed RNA polymerase subunit beta'' from Oryza sativa (Rice).